The following is a 145-amino-acid chain: MTNWINTVSRDHVERGVRGRFTQANHGKPHMLRKMSRGDWIVFYSPKTAYPDGEPLQAFTAIGQVADDEPYQVEVAPDFQPWRRNVDFLDCAETPIRPLLDDLEFIEDKARWGYKFRFGVFRIDDHDLEVIRSAMVTPTAHIAGT.

It belongs to the UPF0310 family.

This is UPF0310 protein Mvan_0064 from Mycolicibacterium vanbaalenii (strain DSM 7251 / JCM 13017 / BCRC 16820 / KCTC 9966 / NRRL B-24157 / PYR-1) (Mycobacterium vanbaalenii).